The following is a 278-amino-acid chain: Large ribosomal subunit protein uL2 (278 aa).

2 disordered regions span residues 33–57 (LIRPLHGTGGRNAHGRITTRHKGGG) and 224–278 (VVMN…GKKR). Residues 45-57 (AHGRITTRHKGGG) show a composition bias toward basic residues. The span at 253–268 (PEGRTRKPNKASDKLI) shows a compositional bias: basic and acidic residues. Over residues 269-278 (VRRRRTGKKR) the composition is skewed to basic residues.

This sequence belongs to the universal ribosomal protein uL2 family. As to quaternary structure, part of the 50S ribosomal subunit. Forms a bridge to the 30S subunit in the 70S ribosome.

One of the primary rRNA binding proteins. Required for association of the 30S and 50S subunits to form the 70S ribosome, for tRNA binding and peptide bond formation. It has been suggested to have peptidyltransferase activity; this is somewhat controversial. Makes several contacts with the 16S rRNA in the 70S ribosome. This chain is Large ribosomal subunit protein uL2, found in Mycobacteroides abscessus (strain ATCC 19977 / DSM 44196 / CCUG 20993 / CIP 104536 / JCM 13569 / NCTC 13031 / TMC 1543 / L948) (Mycobacterium abscessus).